A 215-amino-acid polypeptide reads, in one-letter code: Urease accessory protein UreG (215 aa).

Positions 1–21 are disordered; sequence MNAPASSPARRTKKLPPLRVG. GTP is bound at residue 24–31; the sequence is GPVGSGKT.

This sequence belongs to the SIMIBI class G3E GTPase family. UreG subfamily. Homodimer. UreD, UreF and UreG form a complex that acts as a GTP-hydrolysis-dependent molecular chaperone, activating the urease apoprotein by helping to assemble the nickel containing metallocenter of UreC. The UreE protein probably delivers the nickel.

It localises to the cytoplasm. In terms of biological role, facilitates the functional incorporation of the urease nickel metallocenter. This process requires GTP hydrolysis, probably effectuated by UreG. This chain is Urease accessory protein UreG, found in Burkholderia vietnamiensis (strain G4 / LMG 22486) (Burkholderia cepacia (strain R1808)).